We begin with the raw amino-acid sequence, 92 residues long: uncharacterized protein (92 aa).

Positions 1-23 are cleaved as a signal peptide; the sequence is MNPAIVVIIVLLVAALLIWACKA.

This is an uncharacterized protein from Acheta domesticus (House cricket).